A 401-amino-acid polypeptide reads, in one-letter code: MLSYDYENALKVGEISLEDINKVDFANAYSNLMEKLDNGVVGFRDVIYDENLDKYKSLNGYENVVVIGMGGSILGTMAIYYAISPFNNNAYFIDNSDPEKTLSILKKVDLNESIIYIISKSGNTLETLVNYYLIKKRIEKLNSFKGKLVFITNGGKLKREAEKNNYDIFSIPENVPGRFSVFTAVGLAPLYSLGVDISKILEGAREMDKICQNEDILKNPALLNGVIHYLYDKRGKDISVIMSYVESLKYFGDWYKQLIGESLGKNKHGITPLLSIGAKDQHSLLQLYMDGKKDKIITFMVAKKYRLDEEIEFEDINDEKISCRYSDIIRSQQKATEIALTNNGVPNVRITLDEINEMAMGALLYMYEMQVGFMGELYNINAYNQPAVEEEKKICWRLIKQ.

The Proton donor role is filled by E261. Residues H282 and K392 contribute to the active site.

The protein belongs to the GPI family. As to quaternary structure, homodimer.

It is found in the cytoplasm. It catalyses the reaction alpha-D-glucose 6-phosphate = beta-D-fructose 6-phosphate. The protein operates within carbohydrate biosynthesis; gluconeogenesis. It participates in carbohydrate degradation; glycolysis; D-glyceraldehyde 3-phosphate and glycerone phosphate from D-glucose: step 2/4. With respect to regulation, competively inhibited by 6-phosphogluconate and erythrose 4-phosphate. Catalyzes the isomerization of glucose-6-P to fructose-6-P. This Methanocaldococcus jannaschii (strain ATCC 43067 / DSM 2661 / JAL-1 / JCM 10045 / NBRC 100440) (Methanococcus jannaschii) protein is Glucose-6-phosphate isomerase.